Reading from the N-terminus, the 85-residue chain is DNA-directed RNA polymerase subunit Rpo11 (85 aa).

It belongs to the archaeal Rpo11/eukaryotic RPB11/RPC19 RNA polymerase subunit family. Part of the RNA polymerase complex.

It is found in the cytoplasm. It catalyses the reaction RNA(n) + a ribonucleoside 5'-triphosphate = RNA(n+1) + diphosphate. Functionally, DNA-dependent RNA polymerase (RNAP) catalyzes the transcription of DNA into RNA using the four ribonucleoside triphosphates as substrates. This chain is DNA-directed RNA polymerase subunit Rpo11, found in Methanothermobacter thermautotrophicus (strain ATCC 29096 / DSM 1053 / JCM 10044 / NBRC 100330 / Delta H) (Methanobacterium thermoautotrophicum).